The primary structure comprises 1026 residues: Multidrug resistance protein MdtC (1026 aa).

11 helical membrane-spanning segments follow: residues 15-35 (ILIAAAITLCGILGFRLLPVA), 333-353 (EVEETLAISVALVILVVFLFL), 360-380 (LIPAVAVPVSLISTFAAMYLC), 387-407 (LSLMALTIATGFVVDDAIVVL), 431-451 (VGFTVISMSLSLVAVFLPLLL), 463-483 (FAVTLSVAIGISLVVSLTLTP), 528-548 (LVGVVFLGTIALNIWLYIAIP), 853-873 (LILIMAAIATVYIVLGILYES), 897-917 (LFNAPFSLIALIGIMLLIGIV), 953-973 (PIMMTTLAAMFGALPLVLSGG), and 984-1004 (ITIVGGLVMSQLLTLYTTPVV).

The protein belongs to the resistance-nodulation-cell division (RND) (TC 2.A.6) family. MdtC subfamily. In terms of assembly, part of a tripartite efflux system composed of MdtA, MdtB and MdtC. MdtC forms a heteromultimer with MdtB.

It is found in the cell inner membrane. This Salmonella arizonae (strain ATCC BAA-731 / CDC346-86 / RSK2980) protein is Multidrug resistance protein MdtC.